Here is a 195-residue protein sequence, read N- to C-terminus: Orotate phosphoribosyltransferase (195 aa).

117–125 (EDITTTGGS) serves as a coordination point for 5-phospho-alpha-D-ribose 1-diphosphate. Residues Thr121 and Arg149 each coordinate orotate.

This sequence belongs to the purine/pyrimidine phosphoribosyltransferase family. PyrE subfamily. In terms of assembly, homodimer. It depends on Mg(2+) as a cofactor.

It catalyses the reaction orotidine 5'-phosphate + diphosphate = orotate + 5-phospho-alpha-D-ribose 1-diphosphate. It participates in pyrimidine metabolism; UMP biosynthesis via de novo pathway; UMP from orotate: step 1/2. In terms of biological role, catalyzes the transfer of a ribosyl phosphate group from 5-phosphoribose 1-diphosphate to orotate, leading to the formation of orotidine monophosphate (OMP). The protein is Orotate phosphoribosyltransferase of Acidithiobacillus ferrooxidans (strain ATCC 53993 / BNL-5-31) (Leptospirillum ferrooxidans (ATCC 53993)).